The following is a 2290-amino-acid chain: MKRHQFKSWIFELREILREIKNSHYFLDSWIKFDSVGSFTHIFFHQERFMKLFDPRIWSILLSRDSQGATSNRYFTIKGLVLLVVVVLLSRINNRKMVERKNLYLMGLLPIPMNSIGPRKETLEESFWSSNRNRLIVSLLYLPKGKKISESCFMDPQESTWVIPIKKKRIMPESNRGSRWWRNRIGKKRDSSCQISNETIAGIEISFKEKDSKYLEFLFLSYTDDPIRKDHDWELFDRLSPRKKRNIINLNSGQLFEILGKDLICYLMSAFREKRPIQGESFFKQQGAGATMQSNDIEHVSHLFSRNKWGLSLQNCAQFHMWQFRQDLFVSWGKNQHESDFLRNVSRENWIWLDNVWLVNKDRFFSKVRNVLSNIQYDSTRSIFVQVTDSSQWKGSSSDQSRDHFDSVRNENSEYHTLIDQTEIQQLKERSILWDPSFLQTERTEIESDRFPKCLFGSSSMSWLFTEPEKRMNNHLLPEEIEEFLGNPTRSIRSFFSDRWSELHLGSNPTERSTRDHKLLKKKQDVSFVPSRRAEKKEMVDIFKIITYLQDTVSIHPSEPYHIPDLVPKDEPDMDSSNKISFLNKNPFFDFFHLFHDRNKGGYALRHDFFESEERFPEMADLFTLSITEPDLVFHRGFAFYIDSYGLDQKRFLNEVFNSRDESKKKLVLPPLFYEENESFSRRIRKKSVRIYCGNELEDPKLKTAVFASNNIMEAVNQYRLIRNLQYYGYIRNVSNRFFLMNRSDRNFEYGIQRDQIGNDTLNHITIMKYTINQHLSNLKKSQKKWFDPLISRTERSMNQDPDAYRYKGSDGSKNFQEHLEHFVSEQKNPFQVVQVVFDQLRIHQYSIDWSEVIDKEDLSKSLRFFLSKSLLFLSKSLRFFLSKSLPFFFVSIGNIPIHRSEIRIYELKGPNDQLCNQLLESIGVQIVHLKKLKPFLLDDHDTSQRPKFLINGGTILPFLFKKIPKRVIDSFHTRKNRRKSFDNTDSYFSMISHDRDNWLNPVKAFHRSSLISSFYKANRLRFLNDPHHFWFYCNKRFPFDVEKTRINNYDLTYGQFLNILSIRNKIFSLCVGKKGSLFLERETLSPIESQVSDIFIPNDFPQSGDETYNLYKLYKSFHFPIRSDPFVRGAIYSIADISATPLTEEQIVNLEKTYCQPLSDMNLSDSEGNNLHQYLSFNSNMGLIHTPCSEKYLPSGKRKKRSLCLKKCVEKGQMYRTFQRDSAFSNLSKWNLFQTYMPWFLTSTGCKYLNFTLLDTLSNPLPILSSSQKFVSIFHDMMHGSDISWPIPQKILPQWTLISEISSQCLQNLLLSEEMIHRNNESPVPLIWAHLRSTNAREFLYSIFFLLLVAGYLVRIHLLFVSRASSELQTELEKIKSLMIPSYMMEFRKLLDRYPTSELNPFWLKNLFLVVLEQLGDSLGEIRGSASGGNMLLGGGPAYGVKSIRSKKKYWKINLIDLVSIIPNPINRIIFSRNTRHLSRTSKEIYSLIRKRKNVNGDWIDDKIEFWVANSDSIDDEEREFLVQFSALTTEKRIDQILLSLTHSDHLSKNDSGYQMIEQPGSISLRYLVDIHQKDLMNYEFNRSCLAERRIFLAHYHTITYSQTLCGANIFHSPSPHGKPFSLRLALSPSRGILVIGSIGTGRSCLVKYLATNSYVPFITVFPNKFLDDKPKGYPIDDIDIDDSDDIDDSNDDLDIDKELLTMTNVLTMYMTTKIDRFDITLQFELAKAMSPCIIWIPNIHDLHVNESNYLSLDLLENYLSRDCERCSTGKILVIASTHIPQKVDPALIAPNKLNTCIKIRRLLLPQQLKHFFILSYTRGFHLEKKMFHTNGFGSITMGSNARDLVALINEALSISITQKKSIIETNTIRSALHRKTWDFRSQIRSVQDHGILFYQIGRAVTQNVLLSNCPIDPISIYMKKKSCKGGDSYLYKWYFELGTSMKKLTILLYLLSCSAGSVAQDLWSSSRHDEKNWITSYGFVENDSDLVHGLLLLLLLEVEGALALAGSSRTEKDCSQFDNNRVTLLLRSEPRNQLDMMQNGSCSIVDQRFLYEKYESEFEEGEGALDPQQIEEDLFNHIVWAPRIWRFDCIERPTELGFPYWTGSFRGKWIIYHKEGELQENDSEFLQSGTMQYQTRDRSSKEQGFFRTSQFIWDPADPSFSLFKDQPSVSVFSRREFFADEEMSKGLIASQTNPPTSIYKRWFIKNTQEKHFELLIHRQRWFRTNSSLSNGSFRSNTLSESYQYLSNLFLSNGTLLDQMTKTLLRKRWLFPDEMKHLIHVTGERFPIP.

Residue 1638 to 1645 (GSIGTGRS) coordinates ATP.

Belongs to the Ycf2 family.

It is found in the plastid. It localises to the chloroplast stroma. Probable ATPase of unknown function. Its presence in a non-photosynthetic plant (Epifagus virginiana) and experiments in tobacco indicate that it has an essential function which is probably not related to photosynthesis. This is Protein Ycf2 from Phalaenopsis aphrodite subsp. formosana (Moth orchid).